The following is a 360-amino-acid chain: UDP-N-acetylglucosamine--N-acetylmuramyl-(pentapeptide) pyrophosphoryl-undecaprenol N-acetylglucosamine transferase (360 aa).

Residues Thr12–Gly14, Asn124, Arg161, Ser189, Ile243, and Gln288 contribute to the UDP-N-acetyl-alpha-D-glucosamine site.

The protein belongs to the glycosyltransferase 28 family. MurG subfamily.

The protein resides in the cell inner membrane. The enzyme catalyses di-trans,octa-cis-undecaprenyl diphospho-N-acetyl-alpha-D-muramoyl-L-alanyl-D-glutamyl-meso-2,6-diaminopimeloyl-D-alanyl-D-alanine + UDP-N-acetyl-alpha-D-glucosamine = di-trans,octa-cis-undecaprenyl diphospho-[N-acetyl-alpha-D-glucosaminyl-(1-&gt;4)]-N-acetyl-alpha-D-muramoyl-L-alanyl-D-glutamyl-meso-2,6-diaminopimeloyl-D-alanyl-D-alanine + UDP + H(+). Its pathway is cell wall biogenesis; peptidoglycan biosynthesis. Cell wall formation. Catalyzes the transfer of a GlcNAc subunit on undecaprenyl-pyrophosphoryl-MurNAc-pentapeptide (lipid intermediate I) to form undecaprenyl-pyrophosphoryl-MurNAc-(pentapeptide)GlcNAc (lipid intermediate II). The chain is UDP-N-acetylglucosamine--N-acetylmuramyl-(pentapeptide) pyrophosphoryl-undecaprenol N-acetylglucosamine transferase from Acidithiobacillus ferrooxidans (strain ATCC 23270 / DSM 14882 / CIP 104768 / NCIMB 8455) (Ferrobacillus ferrooxidans (strain ATCC 23270)).